A 1340-amino-acid chain; its full sequence is Protein SHORT ROOT IN SALT MEDIUM 1 (1340 aa).

Disordered regions lie at residues 1–73, 161–185, 357–473, 723–750, 784–990, and 1063–1269; these read MHRD…RSHL, YGEQ…ADPS, EEER…IRRS, TVEV…KKTV, PETT…PPRA, and RNQR…KREE. Positions 7 to 39 are enriched in low complexity; it reads SSRGTGYGQQQYGSQSGYSQNLGSGYPGSSVSG. A compositionally biased stretch (polar residues) spans 46–60; that stretch reads QISLSSRHPSITGAP. 3 stretches are compositionally biased toward basic and acidic residues: residues 173–182, 357–470, and 723–735; these read LQNEPTRRYA, EEER…EASI, and TVEV…KKSP. Positions 355-426 form a coiled coil; it reads LREEERRRED…RERKRALEIK (72 aa). Residues 810–824 are compositionally biased toward polar residues; it reads GDTSDPSAKANEQTP. Residues 828–840 are compositionally biased toward basic residues; it reads IVKKKIIKRVAKR. 4 stretches are compositionally biased toward basic and acidic residues: residues 841–872, 887–988, 1069–1097, and 1105–1138; these read KVAE…KKSS, EDVK…EEPP, HQEE…DKEA, and PGKD…ETLG. A coiled-coil region spans residues 1052–1086; the sequence is LKKLRVKIVRQRNQRKRHQEELSVKQNEAKSQDKR. Residues 1153-1204 are compositionally biased toward acidic residues; that stretch reads ENQDEEDDDGDDDPEEDPEEDPEEDPEEDPEEDPEECEEMDVANTEQEEPAE. Composition is skewed to basic and acidic residues over residues 1205–1214 and 1229–1257; these read EPQKKEENLE and TDNR…HGKQ. The EF-hand domain maps to 1270–1305; it reads TVDKELLQAFRFFDRNQAGYVRVEDMRVTIHSLGKF.

In terms of assembly, interacts with BHLH148/RITF1. Expressed ubiquitously at high levels, including in guard cells.

It localises to the nucleus. Functionally, required for salt tolerance and sodium (Na) homeostasis after salt stress. Together with BHLH148/RITF1, regulates the transcription of several genes involved in the detoxification of reactive oxygen species (ROS) generated by salt (NaCl) stress. Binds calcium. The chain is Protein SHORT ROOT IN SALT MEDIUM 1 from Arabidopsis thaliana (Mouse-ear cress).